Here is a 151-residue protein sequence, read N- to C-terminus: UPF0178 protein VSAL_I0701 (151 aa).

It belongs to the UPF0178 family.

This chain is UPF0178 protein VSAL_I0701, found in Aliivibrio salmonicida (strain LFI1238) (Vibrio salmonicida (strain LFI1238)).